Consider the following 551-residue polypeptide: Chaperonin GroEL (551 aa).

ATP contacts are provided by residues 30 to 33 (TLGP), K51, 87 to 91 (DGTTT), G415, 479 to 481 (NAA), and D495. The tract at residues 523 to 551 (DSPKEDKSSDMPSPSAGGMGGMGGMGGMM) is disordered. Gly residues predominate over residues 539–551 (GGMGGMGGMGGMM).

The protein belongs to the chaperonin (HSP60) family. Forms a cylinder of 14 subunits composed of two heptameric rings stacked back-to-back. Interacts with the co-chaperonin GroES.

Its subcellular location is the cytoplasm. The enzyme catalyses ATP + H2O + a folded polypeptide = ADP + phosphate + an unfolded polypeptide.. In terms of biological role, together with its co-chaperonin GroES, plays an essential role in assisting protein folding. The GroEL-GroES system forms a nano-cage that allows encapsulation of the non-native substrate proteins and provides a physical environment optimized to promote and accelerate protein folding. The sequence is that of Chaperonin GroEL from Buchnera aphidicola subsp. Chaetophorus leucomelas.